Here is a 197-residue protein sequence, read N- to C-terminus: Pyridoxal 5'-phosphate synthase subunit PdxT (197 aa).

Residue 53 to 55 (GES) coordinates L-glutamine. Residue Cys-85 is the Nucleophile of the active site. Residues Arg-114 and 142 to 143 (IR) contribute to the L-glutamine site. Active-site charge relay system residues include His-179 and Glu-181.

The protein belongs to the glutaminase PdxT/SNO family. As to quaternary structure, in the presence of PdxS, forms a dodecamer of heterodimers. Only shows activity in the heterodimer.

It carries out the reaction aldehydo-D-ribose 5-phosphate + D-glyceraldehyde 3-phosphate + L-glutamine = pyridoxal 5'-phosphate + L-glutamate + phosphate + 3 H2O + H(+). The catalysed reaction is L-glutamine + H2O = L-glutamate + NH4(+). The protein operates within cofactor biosynthesis; pyridoxal 5'-phosphate biosynthesis. Its function is as follows. Catalyzes the hydrolysis of glutamine to glutamate and ammonia as part of the biosynthesis of pyridoxal 5'-phosphate. The resulting ammonia molecule is channeled to the active site of PdxS. This chain is Pyridoxal 5'-phosphate synthase subunit PdxT, found in Thermococcus onnurineus (strain NA1).